We begin with the raw amino-acid sequence, 258 residues long: Small ribosomal subunit protein mS23 (258 aa).

Polar residues predominate over residues 230–239 (KKNSTKQSWA). Positions 230 to 258 (KKNSTKQSWAEATEEKEEQDSAEPEELKL) are disordered. The span at 241-258 (ATEEKEEQDSAEPEELKL) shows a compositional bias: acidic residues.

This sequence belongs to the mitochondrion-specific ribosomal protein mS23 family. In terms of assembly, component of the mitochondrial small ribosomal subunit.

The protein localises to the mitochondrion. The sequence is that of Small ribosomal subunit protein mS23 (RSM25) from Eremothecium gossypii (strain ATCC 10895 / CBS 109.51 / FGSC 9923 / NRRL Y-1056) (Yeast).